A 496-amino-acid chain; its full sequence is Germacrene A hydroxylase (496 aa).

The Cytoplasmic portion of the chain corresponds to 1–2 (ME). A helical; Signal-anchor for type II membrane protein transmembrane segment spans residues 3-23 (LTLTTSLGLAVFVFILFKLLT). Residues 24–496 (GSKSTKNSLP…TAYKTANNSA (473 aa)) are Lumenal-facing. Heme is bound at residue Cys432. N-linked (GlcNAc...) asparagine glycosylation is present at Asn493.

This sequence belongs to the cytochrome P450 family. The cofactor is heme.

It localises to the endoplasmic reticulum membrane. The catalysed reaction is (+)-(R)-germacrene A + 3 reduced [NADPH--hemoprotein reductase] + 3 O2 = germacra-1(10),4,11(13)-trien-12-oate + 3 oxidized [NADPH--hemoprotein reductase] + 4 H2O + 4 H(+). Its pathway is secondary metabolite biosynthesis; terpenoid biosynthesis. Functionally, involved in the biosynthesis of germacrene-derived sesquiterpene lactones. Catalyzes three consecutive oxidations of germacrene A to produce germacrene A acid. Could also catalyze the three-step oxidation of non-natural substrate amorphadiene to artemisinic acid. The protein is Germacrene A hydroxylase of Barnadesia spinosa (Spiny barnadesia).